The primary structure comprises 123 residues: Large ribosomal subunit protein bL12 (123 aa).

The protein belongs to the bacterial ribosomal protein bL12 family. Homodimer. Part of the ribosomal stalk of the 50S ribosomal subunit. Forms a multimeric L10(L12)X complex, where L10 forms an elongated spine to which 2 to 4 L12 dimers bind in a sequential fashion. Binds GTP-bound translation factors.

In terms of biological role, forms part of the ribosomal stalk which helps the ribosome interact with GTP-bound translation factors. Is thus essential for accurate translation. The chain is Large ribosomal subunit protein bL12 from Burkholderia vietnamiensis (strain G4 / LMG 22486) (Burkholderia cepacia (strain R1808)).